The chain runs to 201 residues: Recombination protein RecR (201 aa).

The segment at Cys-59–Cys-74 adopts a C4-type zinc-finger fold. The Toprim domain maps to Ser-82–Pro-177.

The protein belongs to the RecR family.

May play a role in DNA repair. It seems to be involved in an RecBC-independent recombinational process of DNA repair. It may act with RecF and RecO. This is Recombination protein RecR from Rickettsia conorii (strain ATCC VR-613 / Malish 7).